Here is an 865-residue protein sequence, read N- to C-terminus: Protein fluG (865 aa).

The 92-residue stretch at 442–533 folds into the GS beta-grasp domain; that stretch reads PGVKYVWTQF…VMTWWKSEQG (92 aa). Residues 540–865 enclose the GS catalytic domain; the sequence is PRTNLLNINN…ARRKWLVERY (326 aa).

Belongs to the glutamine synthetase family.

The protein localises to the cytoplasm. Functionally, may function as a GSI-related enzyme in synthesizing a small diffusible factor that acts as an extracellular signal directing asexual sporulation and perhaps other aspects of colony growth. May be involved in brlA activation (an early transcriptional regulator for conidiation specific gene). In Emericella nidulans (strain FGSC A4 / ATCC 38163 / CBS 112.46 / NRRL 194 / M139) (Aspergillus nidulans), this protein is Protein fluG (fluG).